The chain runs to 320 residues: Cytochrome f (320 aa).

Positions 1–35 (MQTRNTFSWIREEITRSISVSLMIYIITWASISSA) are cleaved as a signal peptide. Residues tyrosine 36, cysteine 56, cysteine 59, and histidine 60 each coordinate heme. Residues 286–305 (VQGLLFFLGSVVLAQIFLVL) traverse the membrane as a helical segment.

It belongs to the cytochrome f family. As to quaternary structure, the 4 large subunits of the cytochrome b6-f complex are cytochrome b6, subunit IV (17 kDa polypeptide, petD), cytochrome f and the Rieske protein, while the 4 small subunits are PetG, PetL, PetM and PetN. The complex functions as a dimer. It depends on heme as a cofactor. In terms of processing, purified from leaves as a water-soluble monomeric protein with a mass of 28.16 kDa, cleavage occurs after Gln-287 and separates the heme-binding from the membrane.

Its subcellular location is the plastid. The protein resides in the chloroplast thylakoid membrane. Component of the cytochrome b6-f complex, which mediates electron transfer between photosystem II (PSII) and photosystem I (PSI), cyclic electron flow around PSI, and state transitions. The polypeptide is Cytochrome f (petA) (Brassica rapa subsp. rapa (Turnip)).